The following is a 703-amino-acid chain: Polyribonucleotide nucleotidyltransferase (703 aa).

Residues Asp486 and Asp492 each contribute to the Mg(2+) site. The KH domain occupies 554 to 613 (PKIITTNIDPEKIRDVIGPGGKMINKIIAETGVKIDIEEDGRVYILTPDSAAAQKALKII). The 69-residue stretch at 623–691 (GEVYLGKVVR…KQGRINLSRK (69 aa)) folds into the S1 motif domain.

It belongs to the polyribonucleotide nucleotidyltransferase family. It depends on Mg(2+) as a cofactor.

The protein localises to the cytoplasm. It catalyses the reaction RNA(n+1) + phosphate = RNA(n) + a ribonucleoside 5'-diphosphate. In terms of biological role, involved in mRNA degradation. Catalyzes the phosphorolysis of single-stranded polyribonucleotides processively in the 3'- to 5'-direction. This is Polyribonucleotide nucleotidyltransferase from Ruminiclostridium cellulolyticum (strain ATCC 35319 / DSM 5812 / JCM 6584 / H10) (Clostridium cellulolyticum).